A 305-amino-acid chain; its full sequence is Phosphatidate cytidylyltransferase (305 aa).

Transmembrane regions (helical) follow at residues 24–44, 97–117, 124–144, 151–171, 202–222, 232–252, and 277–297; these read LLVF…AFIV, PEHV…HLVF, LGPI…SVPI, LYGF…IFLI, TVVG…IFYS, IAMP…GFFG, and MLDV…ILLI.

Belongs to the CDS family.

It localises to the cell membrane. The catalysed reaction is a 1,2-diacyl-sn-glycero-3-phosphate + CTP + H(+) = a CDP-1,2-diacyl-sn-glycerol + diphosphate. The protein operates within phospholipid metabolism; CDP-diacylglycerol biosynthesis; CDP-diacylglycerol from sn-glycerol 3-phosphate: step 3/3. The polypeptide is Phosphatidate cytidylyltransferase (cdsA) (Chlamydia muridarum (strain MoPn / Nigg)).